Here is a 76-residue protein sequence, read N- to C-terminus: MRRTVPRGTLRKIIKKHKPHLRLAANTDLLVHLSFLLFLHRLAEEARTNAFENKSKIIKPEHTIAAAKVILKKSRG.

Belongs to the CENP-W/WIP1 family. In terms of assembly, heterodimer with CENPT; this dimer coassembles with CENPS-CENPX heterodimers at centromeres to form the tetrameric CENP-T-W-S-X complex, which is a subcomplex of the large constitutive centromere-associated network (CCAN, also known as the interphase centromere complex or ICEN). Interacts with NPM1.

It is found in the nucleus. The protein localises to the chromosome. Its subcellular location is the centromere. It localises to the kinetochore. Component of the CENPA-NAC (nucleosome-associated) complex, a complex that plays a central role in assembly of kinetochore proteins, mitotic progression and chromosome segregation. The CENPA-NAC complex recruits the CENPA-CAD (nucleosome distal) complex and may be involved in incorporation of newly synthesized CENPA into centromeres. Part of a nucleosome-associated complex that binds specifically to histone H3-containing nucleosomes at the centromere, as opposed to nucleosomes containing CENPA. Component of the heterotetrameric CENP-T-W-S-X complex that binds and supercoils DNA, and plays an important role in kinetochore assembly. CENPW has a fundamental role in kinetochore assembly and function. It is one of the inner kinetochore proteins, with most further proteins binding downstream. Required for normal chromosome organization and normal progress through mitosis. This is Centromere protein W (CENPW) from Gallus gallus (Chicken).